The following is a 256-amino-acid chain: Major prion protein (256 aa).

An N-terminal signal peptide occupies residues 1–24 (MVKSHIGSWILVLFVAMWSDVGLC). Residues 25-41 (KKRPKPGGGWNTGGSRY) are interaction with ADGRG6. An interaction with GRB2, ERI3 and SYN1 region spans residues 25-233 (KKRPKPGGGW…ESEAYYQRRA (209 aa)). Residues 28 to 110 (PKPGGGWNTG…QWNKPSKPKT (83 aa)) form a disordered region. 5 repeat units span residues 54-62 (PQGGGGWGQ), 63-70 (PHGGGWGQ), 71-78 (PHGGGWGQ), 79-86 (PHGGGWGQ), and 87-95 (PHGGGGWGQ). The segment at 54–95 (PQGGGGWGQPHGGGWGQPHGGGWGQPHGGGWGQPHGGGGWGQ) is 5 X 8 AA tandem repeats of P-H-G-G-G-W-G-Q. A compositionally biased stretch (gly residues) spans 55–97 (QGGGGWGQPHGGGWGQPHGGGWGQPHGGGWGQPHGGGGWGQGG). Cu(2+) contacts are provided by H64, G65, G66, H72, G73, G74, H80, G81, G82, H88, G90, and G91. C182 and C217 form a disulfide bridge. 2 N-linked (GlcNAc...) asparagine glycosylation sites follow: N184 and N200. A233 carries GPI-anchor amidated alanine lipidation. Residues 234-256 (SAILFSSPPVILLISFLIFLIVG) constitute a propeptide, removed in mature form.

It belongs to the prion family. In terms of assembly, monomer and homodimer. Has a tendency to aggregate into amyloid fibrils containing a cross-beta spine, formed by a steric zipper of superposed beta-strands. Soluble oligomers may represent an intermediate stage on the path to fibril formation. Copper binding may promote oligomerization. Interacts with GRB2, APP, ERI3/PRNPIP and SYN1. Mislocalized cytosolically exposed PrP interacts with MGRN1; this interaction alters MGRN1 subcellular location and causes lysosomal enlargement. Interacts with APP. Interacts with KIAA1191. Interacts with ADGRG6.

The protein resides in the cell membrane. It is found in the golgi apparatus. In terms of biological role, its primary physiological function is unclear. May play a role in neuronal development and synaptic plasticity. May be required for neuronal myelin sheath maintenance. May promote myelin homeostasis through acting as an agonist for ADGRG6 receptor. May play a role in iron uptake and iron homeostasis. Soluble oligomers are toxic to cultured neuroblastoma cells and induce apoptosis (in vitro). Association with GPC1 (via its heparan sulfate chains) targets PRNP to lipid rafts. Also provides Cu(2+) or Zn(2+) for the ascorbate-mediated GPC1 deaminase degradation of its heparan sulfate side chains. This is Major prion protein (PRNP) from Felis catus (Cat).